Reading from the N-terminus, the 277-residue chain is MEVIPNINSRRAGLIARIKLIVRGDLTTGNYDPVLAESFSGCIPTRSAFQFSGADGVESAFPVEYVMRMMNDWAKGECNPYIKIQNTGVSVLIEGFFDPPINATKAPLCTDKVNVLLNTTESTGIVLSDINKIKQSIGVDCRPFQACLIVNCFVRLPIVQLAFRFVGPSDPGRTTKLLDSAIAAYDAKIRQRRKRNLQIMESKSQDHTSDGCIPIPIIDETHRSGITGESKSLFGMFKNIASGECVTTIRIPRYIVMLWIFSVLLAMVTWGSYRLYS.

Residues Met1 to Arg250 are Perinuclear space-facing. Residues Ile251–Gly271 form a helical membrane-spanning segment. Topologically, residues Ser272–Ser277 are nuclear.

It belongs to the herpesviridae NEC2 protein family. Forms a heterohexameric complex with NEC1. In terms of processing, phosphorylated.

It is found in the host nucleus inner membrane. Functionally, plays an essential role in virion nuclear egress, the first step of virion release from infected cell. Within the host nucleus, NEC1 interacts with the newly formed capsid through the vertexes and directs it to the inner nuclear membrane by associating with NEC2. Induces the budding of the capsid at the inner nuclear membrane as well as its envelopment into the perinuclear space. There, the NEC1/NEC2 complex promotes the fusion of the enveloped capsid with the outer nuclear membrane and the subsequent release of the viral capsid into the cytoplasm where it will reach the secondary budding sites in the host Golgi or trans-Golgi network. The protein is Nuclear egress protein 2 of Gallid herpesvirus 2 (strain Chicken/Md5/ATCC VR-987) (GaHV-2).